A 95-amino-acid polypeptide reads, in one-letter code: uncharacterized protein (95 aa).

A helical membrane pass occupies residues 3–23; the sequence is FVIIIAILLLGISLILAFTVL.

It is found in the membrane. This is an uncharacterized protein from Methanocaldococcus jannaschii (strain ATCC 43067 / DSM 2661 / JAL-1 / JCM 10045 / NBRC 100440) (Methanococcus jannaschii).